The following is a 323-amino-acid chain: MFSSPDSPILHCLPRVAIIGAGRVGSTLAQRIAEKNLADVVLLDIVEGIPQGLALDLLEARGIELHNRQIIGTNNYADTSGSQIVVITAGFPRKPGMSRDDLLRTNAKIVIEAAKQAIAYSPYAIFIVVTNPLDVMTYLAWEATGLPRNRIMGMAGVLDSARFETFIALELGVLPADVKAMVLGSHGDLMVPLSRYATVNGIPITQLLDAVTIERLVERTRNGGAEIVELMQTGGAFFAPASATSLMVESILLNQSRLLPVSIYLQGEYDLKDVVIGVPCRLGLNGIESVIELNLSDSEREALHISAKSVQKNIERWRSLQNS.

NAD(+)-binding positions include 20-25 (GAGRVG) and Asp-44. The substrate site is built by Arg-93 and Arg-99. Residues Asn-106 and 129 to 131 (VTN) each bind NAD(+). Substrate is bound by residues Asn-131 and Arg-162. His-186 (proton acceptor) is an active-site residue.

This sequence belongs to the LDH/MDH superfamily. MDH type 3 family.

The catalysed reaction is (S)-malate + NAD(+) = oxaloacetate + NADH + H(+). In terms of biological role, catalyzes the reversible oxidation of malate to oxaloacetate. This Nostoc sp. (strain PCC 7120 / SAG 25.82 / UTEX 2576) protein is Malate dehydrogenase.